A 333-amino-acid polypeptide reads, in one-letter code: Homeobox protein Hox-A1 (333 aa).

The disordered stretch occupies residues 61–82 (ITSPHHHHHHHHHPQPATYQTS). Basic residues predominate over residues 64–74 (PHHHHHHHHHP). The segment at 74–202 (PQPATYQTSG…PASETSSPAQ (129 aa)) is interaction with OGT. An O-linked (GlcNAc) threonine glycan is attached at Thr-152. The short motif at 203–208 (TFDWMK) is the Antp-type hexapeptide element. Residues 227-286 (QPNAVRTNFTTKQLTELEKEFHFNKYLTRARSEIAASLQLNETQVKIWFQNRRMKQKKRE) constitute a DNA-binding region (homeobox). The disordered stretch occupies residues 279–333 (RMKQKKREKEGLLPMSPATPPGSDEKTEESSEKSSSSPSAPSPASSTSDTLTTSH). Over residues 301–310 (SDEKTEESSE) the composition is skewed to basic and acidic residues. The span at 311–333 (KSSSSPSAPSPASSTSDTLTTSH) shows a compositional bias: low complexity.

This sequence belongs to the Antp homeobox family. Labial subfamily. As to quaternary structure, interacts with OGT (via TPR repeats domain); the interaction takes place mainly in the nucleus. Forms a DNA-binding heterodimer with transcription factor PBX1. Post-translationally, glycosylated by OGT.

The protein resides in the nucleus. In terms of biological role, sequence-specific transcription factor. Regulates multiple developmental processes including brainstem, inner and outer ear, abducens nerve and cardiovascular development and morphogenesis as well as cognition and behavior. Also part of a developmental regulatory system that provides cells with specific positional identities on the anterior-posterior axis. Acts on the anterior body structures. Seems to act in the maintenance and/or generation of hindbrain segments. Activates transcription in the presence of PBX1A and PKNOX1. The chain is Homeobox protein Hox-A1 (Hoxa1) from Rattus norvegicus (Rat).